The following is a 479-amino-acid chain: Glutamate--tRNA ligase (479 aa).

The 'HIGH' region signature appears at 9–19 (PSPTGLFHIGT). The 'KMSKS' region motif lies at 248-252 (KLSKR). K251 contacts ATP.

Belongs to the class-I aminoacyl-tRNA synthetase family. Glutamate--tRNA ligase type 1 subfamily. As to quaternary structure, monomer.

It localises to the cytoplasm. The enzyme catalyses tRNA(Glu) + L-glutamate + ATP = L-glutamyl-tRNA(Glu) + AMP + diphosphate. In terms of biological role, catalyzes the attachment of glutamate to tRNA(Glu) in a two-step reaction: glutamate is first activated by ATP to form Glu-AMP and then transferred to the acceptor end of tRNA(Glu). The polypeptide is Glutamate--tRNA ligase (Prochlorococcus marinus (strain MIT 9215)).